We begin with the raw amino-acid sequence, 324 residues long: Nidogen-1 (324 aa).

In terms of domain architecture, NIDO spans Pro-16 to Pro-178. N-linked (GlcNAc...) asparagine glycosylation is present at Asn-97. Tyr-200 and Tyr-205 each carry sulfotyrosine. Residues Thr-219–Thr-259 are disordered. Residues Ala-247 to Thr-259 are compositionally biased toward basic and acidic residues. Residues Ser-295 to Val-324 form the EGF-like domain. Cystine bridges form between Cys-299/Cys-312 and Cys-306/Cys-321.

In terms of assembly, interacts with FBLN1. Interacts with LGALS3BP. Interacts with PLXDC1. Interacts with SVEP1. In terms of processing, N- and O-glycosylated.

Its subcellular location is the secreted. It is found in the extracellular space. The protein resides in the extracellular matrix. The protein localises to the basement membrane. In terms of biological role, sulfated glycoprotein widely distributed in basement membranes and tightly associated with laminin. Also binds to collagen IV and perlecan. It probably has a role in cell-extracellular matrix interactions. The polypeptide is Nidogen-1 (Nid1) (Rattus norvegicus (Rat)).